A 177-amino-acid polypeptide reads, in one-letter code: Mitochondrial inner membrane protease subunit 2 (177 aa).

A helical transmembrane segment spans residues 19-37 (FFVAVPVAVTFLDRVACVA). Catalysis depends on residues Ser-43 and Lys-91.

This sequence belongs to the peptidase S26 family. IMP2 subfamily. Heterodimer of 2 subunits, IMMPL1 and IMMPL2.

Its subcellular location is the mitochondrion inner membrane. Its function is as follows. Catalyzes the removal of transit peptides required for the targeting of proteins from the mitochondrial matrix, across the inner membrane, into the inter-membrane space. Known to process the nuclear encoded protein DIABLO. This chain is Mitochondrial inner membrane protease subunit 2 (IMMP2L), found in Bos taurus (Bovine).